We begin with the raw amino-acid sequence, 358 residues long: Pyruvate dehydrogenase E1 component subunit alpha (358 aa).

Heterodimer of an alpha and a beta chain. Thiamine diphosphate is required as a cofactor.

The catalysed reaction is N(6)-[(R)-lipoyl]-L-lysyl-[protein] + pyruvate + H(+) = N(6)-[(R)-S(8)-acetyldihydrolipoyl]-L-lysyl-[protein] + CO2. Its function is as follows. The pyruvate dehydrogenase complex catalyzes the overall conversion of pyruvate to acetyl-CoA and CO(2). It contains multiple copies of three enzymatic components: pyruvate dehydrogenase (E1), dihydrolipoamide acetyltransferase (E2) and lipoamide dehydrogenase (E3). In Mycoplasma genitalium (strain ATCC 33530 / DSM 19775 / NCTC 10195 / G37) (Mycoplasmoides genitalium), this protein is Pyruvate dehydrogenase E1 component subunit alpha (pdhA).